A 242-amino-acid polypeptide reads, in one-letter code: Ubiquitin-conjugating enzyme E2 6 (242 aa).

Topologically, residues 1 to 220 (MASRQSQKRL…HSTPSFGVQR (220 aa)) are cytoplasmic. Residues 5–156 (QSQKRLTKEY…NQRFTKQFPD (152 aa)) form the UBC core domain. Cysteine 87 (glycyl thioester intermediate) is an active-site residue. The segment at 170 to 190 (AREQAAATTDSTDPEKPFDVR) is disordered. The helical transmembrane segment at 221-240 (FTLVGVVVAAFIAAYFNFFS) threads the bilayer.

It belongs to the ubiquitin-conjugating enzyme family.

It is found in the endoplasmic reticulum membrane. The enzyme catalyses S-ubiquitinyl-[E1 ubiquitin-activating enzyme]-L-cysteine + [E2 ubiquitin-conjugating enzyme]-L-cysteine = [E1 ubiquitin-activating enzyme]-L-cysteine + S-ubiquitinyl-[E2 ubiquitin-conjugating enzyme]-L-cysteine.. The protein operates within protein modification; protein ubiquitination. Functionally, catalyzes the covalent attachment of ubiquitin to other proteins. Functions in degradation of misfolded or regulated proteins localized in the endoplasmic reticulum (ER) lumen or membrane via the ubiquitin-proteasome system. Cognate E2 conjugating enzyme for the DOA10 ubiquitin ligase complex, which is part of the ERAD-C pathway responsible for the rapid degradation of membrane proteins with misfolded cytoplasmic domains. The polypeptide is Ubiquitin-conjugating enzyme E2 6 (UBC6) (Debaryomyces hansenii (strain ATCC 36239 / CBS 767 / BCRC 21394 / JCM 1990 / NBRC 0083 / IGC 2968) (Yeast)).